The chain runs to 241 residues: Orotidine 5'-phosphate decarboxylase (241 aa).

Substrate contacts are provided by residues aspartate 19, lysine 41, 69–78, threonine 124, arginine 185, glutamine 194, glycine 214, and arginine 215; that span reads DLKFFDIPAT. The active-site Proton donor is the lysine 71.

Belongs to the OMP decarboxylase family. Type 1 subfamily. In terms of assembly, homodimer.

It carries out the reaction orotidine 5'-phosphate + H(+) = UMP + CO2. The protein operates within pyrimidine metabolism; UMP biosynthesis via de novo pathway; UMP from orotate: step 2/2. Catalyzes the decarboxylation of orotidine 5'-monophosphate (OMP) to uridine 5'-monophosphate (UMP). This is Orotidine 5'-phosphate decarboxylase from Stenotrophomonas maltophilia (strain K279a).